The following is a 239-amino-acid chain: Fatty acid metabolism regulator protein (239 aa).

The HTH gntR-type domain occupies 6 to 74; that stretch reads QSPAGFAEEY…HGKPTKVNNF (69 aa). Positions 34-53 form a DNA-binding region, H-T-H motif; it reads ERELSELIGVTRTTLREVLQ.

Homodimer.

It is found in the cytoplasm. Multifunctional regulator of fatty acid metabolism. Represses transcription of at least eight genes required for fatty acid transport and beta-oxidation including fadA, fadB, fadD, fadL and fadE. Activates transcription of at least three genes required for unsaturated fatty acid biosynthesis: fabA, fabB and iclR, the gene encoding the transcriptional regulator of the aceBAK operon encoding the glyoxylate shunt enzymes. Binding of FadR is specifically inhibited by long chain fatty acyl-CoA compounds. This is Fatty acid metabolism regulator protein from Salmonella typhimurium (strain LT2 / SGSC1412 / ATCC 700720).